The sequence spans 187 residues: GTP cyclohydrolase 1 (187 aa).

Zn(2+) is bound by residues Cys81, His84, and Cys152.

Belongs to the GTP cyclohydrolase I family. As to quaternary structure, toroid-shaped homodecamer, composed of two pentamers of five dimers.

The catalysed reaction is GTP + H2O = 7,8-dihydroneopterin 3'-triphosphate + formate + H(+). It functions in the pathway cofactor biosynthesis; 7,8-dihydroneopterin triphosphate biosynthesis; 7,8-dihydroneopterin triphosphate from GTP: step 1/1. The chain is GTP cyclohydrolase 1 from Pyrobaculum aerophilum (strain ATCC 51768 / DSM 7523 / JCM 9630 / CIP 104966 / NBRC 100827 / IM2).